Here is a 334-residue protein sequence, read N- to C-terminus: MSLAAKITVLGAGSYGTALAICLARNGHKTLLWGRDDNHVAAMEQDRENNKYLADCPFPENLALEADLEKAVQASDNLLVVVPSHAFADMLKQIKPMLTENAKIAWATKGLDPQTGDLLQNVARTVLGDRVSLAVLSGPTFAKEMASGLPTAISLSSEDDEFVAELSDLLHCEKRFRVYSNKDFIGVQLGGAVKNVIAIAAGIADGIGFGANARTALITRGLAEMTRLGLALNAEPATFMGMAGLGDLVLTCTDNQSRNRRFGLALGQGKEVEQAITDIGQVVEGYRNTKEVYMLAQRHDVEMPIVEQVYQVLYRGKDAKLAAADLLSRDKKFE.

The NADPH site is built by Ser14, Tyr15, Arg35, and Lys109. Sn-glycerol 3-phosphate contacts are provided by Lys109, Gly138, and Thr140. NADPH is bound at residue Ala142. 5 residues coordinate sn-glycerol 3-phosphate: Lys194, Asp247, Ser257, Arg258, and Asn259. The Proton acceptor role is filled by Lys194. Arg258 is a binding site for NADPH. Positions 282 and 284 each coordinate NADPH.

The protein belongs to the NAD-dependent glycerol-3-phosphate dehydrogenase family.

Its subcellular location is the cytoplasm. The enzyme catalyses sn-glycerol 3-phosphate + NAD(+) = dihydroxyacetone phosphate + NADH + H(+). It catalyses the reaction sn-glycerol 3-phosphate + NADP(+) = dihydroxyacetone phosphate + NADPH + H(+). It participates in membrane lipid metabolism; glycerophospholipid metabolism. In terms of biological role, catalyzes the reduction of the glycolytic intermediate dihydroxyacetone phosphate (DHAP) to sn-glycerol 3-phosphate (G3P), the key precursor for phospholipid synthesis. This is Glycerol-3-phosphate dehydrogenase [NAD(P)+] from Colwellia psychrerythraea (strain 34H / ATCC BAA-681) (Vibrio psychroerythus).